The primary structure comprises 515 residues: MALLSAPVRRRRSRVRVLLVCCCLLLALAAPSAAAAAAGHDYGDALAKSILFFEGQRSGRLPAAGQRAAWRGDSAVSDGGAAGVDLEGGYYDAGDNVKFGFPMAFTATMLAWGVVEFGDAMPPAERAHAADAVRWATDYLLKTISHPGVIFIQVGDPTKDHGCWERPEDMDTARTVYNISAARPGSDVAGETAAALAAASMVFRDDDPAYAARLLAGARSAFEFADEHKGAYSDDPELRAGGCPFYCDFDGYQDELLWGAAWLRRASKEGTYLDYIQNNGKTLGAEDSTNEFGWDNKHAGINVLVSKEFIDGEVLSLQSYKEFADGFICTLIPESSSPHITYTPGGMIYKPGGSNMQHVTSISFLLLTYAKYLSNSSRTVNCGNVSVGPATLQQLARKQADYILGDNPMKMSYMVGYGDRYPQRIHHRGSSLPSIKSHPQRIACNDGTPYYNSSSPNPNPLIGAVVGGPGEDDVYEDDRADFRKSEPTTYINAPLVGVLAYLVGNPDPGQGHVRH.

The signal sequence occupies residues 1-29; the sequence is MALLSAPVRRRRSRVRVLLVCCCLLLALA. D95 serves as the catalytic Nucleophile. N178, N375, and N384 each carry an N-linked (GlcNAc...) asparagine glycan. H426 is an active-site residue. N-linked (GlcNAc...) asparagine glycosylation is present at N452. Active-site residues include D477 and E486.

The protein belongs to the glycosyl hydrolase 9 (cellulase E) family.

The protein resides in the secreted. The enzyme catalyses Endohydrolysis of (1-&gt;4)-beta-D-glucosidic linkages in cellulose, lichenin and cereal beta-D-glucans.. The chain is Endoglucanase 23 (GLU12) from Oryza sativa subsp. japonica (Rice).